We begin with the raw amino-acid sequence, 593 residues long: MGIIDGSLLRRLICLCLWCLLGGGVTVVTAEDEKKVVHKQLNQTPTWAVAAVCTFFIVVSVLLEKLLHKVGKVLWDRHKTALLDALEKIKAELMVLGFISLLLTFGQTYILDICIPSHVARTMLPCPAPNLKKEDDDNGESHRRLLSFEHRFLSGGEASPTKCTKEGYVELISAEALHQLHILIFFLAIFHVLYSFLTMMLGRLKIRGWKHWENETSSHNYEFSTDTSRFRLTHETSFVRAHTSFWTRIPFFFYVGCFFRQFFRSVGRTDYLTLRNGFIAVHLAPGSQFNFQKYIKRSLEDDFKVVVGVSPVLWGSFVLFLLLNIDGFKMMFIGTAIPVIIILAVGTKLQAIMTRMALGITDRHAVVQGMPLVQGNDEYFWFGRPHLILHLMHFALFQNAFQITYFFWIWYSFGSDSCYHPNFKIALVKVAIALGVLCLCSYITLPLYALVTQMGSRMKKSVFDEQTSKALKKWRMAVKKKKGVKATTKRLGGDGSASPTASTVRSTSSVRSLQRYKTTPHSMRYEGLDPETSDLDTDNEALTPPKSPPSFELVVKVEPNKTNTGETSRDTETDSKEFSFVKPAPSNESSQDR.

The Extracellular segment spans residues 1 to 46 (MGIIDGSLLRRLICLCLWCLLGGGVTVVTAEDEKKVVHKQLNQTPT). A helical transmembrane segment spans residues 47 to 67 (WAVAAVCTFFIVVSVLLEKLL). At 68-92 (HKVGKVLWDRHKTALLDALEKIKAE) the chain is on the cytoplasmic side. A helical transmembrane segment spans residues 93-113 (LMVLGFISLLLTFGQTYILDI). Topologically, residues 114 to 181 (CIPSHVARTM…ISAEALHQLH (68 aa)) are extracellular. The chain crosses the membrane as a helical span at residues 182 to 202 (ILIFFLAIFHVLYSFLTMMLG). At 203–304 (RLKIRGWKHW…IKRSLEDDFK (102 aa)) the chain is on the cytoplasmic side. A helical membrane pass occupies residues 305–325 (VVVGVSPVLWGSFVLFLLLNI). Aspartate 326 is a topological domain (extracellular). A helical membrane pass occupies residues 327–347 (GFKMMFIGTAIPVIIILAVGT). Residues 348–393 (KLQAIMTRMALGITDRHAVVQGMPLVQGNDEYFWFGRPHLILHLMH) are Cytoplasmic-facing. Residues 394-414 (FALFQNAFQITYFFWIWYSFG) form a helical membrane-spanning segment. At 415 to 430 (SDSCYHPNFKIALVKV) the chain is on the extracellular side. The chain crosses the membrane as a helical span at residues 431–451 (AIALGVLCLCSYITLPLYALV). At 452–593 (TQMGSRMKKS…APSNESSQDR (142 aa)) the chain is on the cytoplasmic side. A calmodulin-binding region spans residues 465 to 486 (EQTSKALKKWRMAVKKKKGVKA). The disordered stretch occupies residues 481–593 (KKGVKATTKR…APSNESSQDR (113 aa)). Residues 489–512 (KRLGGDGSASPTASTVRSTSSVRS) show a composition bias toward low complexity. Residues 528-539 (LDPETSDLDTDN) are compositionally biased toward acidic residues. Basic and acidic residues predominate over residues 567-579 (TSRDTETDSKEFS).

Belongs to the MLO family.

The protein resides in the membrane. Functionally, may be involved in modulation of pathogen defense and leaf cell death. Activity seems to be regulated by Ca(2+)-dependent calmodulin binding and seems not to require heterotrimeric G proteins. The polypeptide is MLO-like protein 8 (MLO8) (Arabidopsis thaliana (Mouse-ear cress)).